The chain runs to 112 residues: Large ribosomal subunit protein uL22 (112 aa).

This sequence belongs to the universal ribosomal protein uL22 family. In terms of assembly, part of the 50S ribosomal subunit.

In terms of biological role, this protein binds specifically to 23S rRNA; its binding is stimulated by other ribosomal proteins, e.g. L4, L17, and L20. It is important during the early stages of 50S assembly. It makes multiple contacts with different domains of the 23S rRNA in the assembled 50S subunit and ribosome. Functionally, the globular domain of the protein is located near the polypeptide exit tunnel on the outside of the subunit, while an extended beta-hairpin is found that lines the wall of the exit tunnel in the center of the 70S ribosome. This is Large ribosomal subunit protein uL22 from Caldanaerobacter subterraneus subsp. tengcongensis (strain DSM 15242 / JCM 11007 / NBRC 100824 / MB4) (Thermoanaerobacter tengcongensis).